The sequence spans 57 residues: Large ribosomal subunit protein bL32 (57 aa).

The tract at residues 1–20 (MAVQQRRSSKHRRDKRRSHD) is disordered. Over residues 7 to 18 (RSSKHRRDKRRS) the composition is skewed to basic residues.

Belongs to the bacterial ribosomal protein bL32 family.

This is Large ribosomal subunit protein bL32 (rpmF) from Mycoplasma genitalium (strain ATCC 33530 / DSM 19775 / NCTC 10195 / G37) (Mycoplasmoides genitalium).